Reading from the N-terminus, the 102-residue chain is NADH-quinone oxidoreductase subunit K (102 aa).

3 helical membrane passes run 6 to 26 (LEHG…GVMV), 30 to 50 (LLFM…AFVL), and 62 to 82 (IMFI…LAIV).

The protein belongs to the complex I subunit 4L family. As to quaternary structure, NDH-1 is composed of 14 different subunits. Subunits NuoA, H, J, K, L, M, N constitute the membrane sector of the complex.

The protein resides in the cell inner membrane. The enzyme catalyses a quinone + NADH + 5 H(+)(in) = a quinol + NAD(+) + 4 H(+)(out). Its function is as follows. NDH-1 shuttles electrons from NADH, via FMN and iron-sulfur (Fe-S) centers, to quinones in the respiratory chain. The immediate electron acceptor for the enzyme in this species is believed to be ubiquinone. Couples the redox reaction to proton translocation (for every two electrons transferred, four hydrogen ions are translocated across the cytoplasmic membrane), and thus conserves the redox energy in a proton gradient. The sequence is that of NADH-quinone oxidoreductase subunit K from Acinetobacter baylyi (strain ATCC 33305 / BD413 / ADP1).